The sequence spans 479 residues: Poly(A) polymerase catalytic subunit (479 aa).

Catalysis depends on residues Asp-202 and Asp-204. Ca(2+) is bound by residues Asp-202, Asp-204, and Asp-253.

It belongs to the poxviridae poly(A) polymerase catalytic subunit family. As to quaternary structure, heterodimer of a large (catalytic) subunit and a small (regulatory) subunit.

It carries out the reaction RNA(n) + ATP = RNA(n)-3'-adenine ribonucleotide + diphosphate. Polymerase that creates the 3'-poly(A) tail of mRNA's. The protein is Poly(A) polymerase catalytic subunit (OPG063) of Bos taurus (Bovine).